Consider the following 130-residue polypeptide: Small ribosomal subunit protein bS18 (130 aa).

Composition is skewed to basic and acidic residues over residues 98–108 (KKMEESVKSAE) and 117–130 (EESKPKRTRKAKTE). Residues 98-130 (KKMEESVKSAEPKATAEATEESKPKRTRKAKTE) are disordered.

The protein belongs to the bacterial ribosomal protein bS18 family. As to quaternary structure, part of the 30S ribosomal subunit. Forms a tight heterodimer with protein bS6.

Functionally, binds as a heterodimer with protein bS6 to the central domain of the 16S rRNA, where it helps stabilize the platform of the 30S subunit. The polypeptide is Small ribosomal subunit protein bS18 (Metamycoplasma arthritidis (strain 158L3-1) (Mycoplasma arthritidis)).